The following is a 121-amino-acid chain: Acid shock protein (121 aa).

A signal peptide spans 1–21 (MKKVLALMVAATLGLSSVAFA). The propeptide occupies 22–63 (ADTTATATPAATSTTATVAAQTKATQHQKHKVTKKTTEQKAQ). The tract at residues 40–121 (AAQTKATQHQ…AKKPVAAPAA (82 aa)) is disordered. Low complexity predominate over residues 74–83 (VQKAPVQKAQ). Basic residues predominate over residues 84-93 (AAKKHVKKAS). Residues 94 to 103 (VQKAPVQKAQ) show a composition bias toward low complexity. The segment covering 104–113 (AAKKHHKTAK) has biased composition (basic residues).

It belongs to the Asr family. In terms of processing, proteolytic processing gives rise to the active protein.

It localises to the periplasm. Functionally, required for growth and/or survival at acidic conditions. The sequence is that of Acid shock protein from Yersinia pseudotuberculosis serotype O:1b (strain IP 31758).